Consider the following 800-residue polypeptide: Phenylalanine--tRNA ligase beta subunit (800 aa).

The tRNA-binding domain maps to T39–L154. The B5 domain occupies A408–S483. Mg(2+) is bound by residues D461, D467, E470, and E471. The 93-residue stretch at P708–R800 folds into the FDX-ACB domain.

It belongs to the phenylalanyl-tRNA synthetase beta subunit family. Type 1 subfamily. As to quaternary structure, tetramer of two alpha and two beta subunits. The cofactor is Mg(2+).

It is found in the cytoplasm. It carries out the reaction tRNA(Phe) + L-phenylalanine + ATP = L-phenylalanyl-tRNA(Phe) + AMP + diphosphate + H(+). This Staphylococcus aureus (strain COL) protein is Phenylalanine--tRNA ligase beta subunit.